We begin with the raw amino-acid sequence, 470 residues long: Ribulose bisphosphate carboxylase large chain (470 aa).

The substrate site is built by N115 and T165. The active-site Proton acceptor is the K167. A substrate-binding site is contributed by K169. Residues K193, D195, and E196 each contribute to the Mg(2+) site. K193 is subject to N6-carboxylysine. The active-site Proton acceptor is H286. Residues R287, H319, and S371 each coordinate substrate.

The protein belongs to the RuBisCO large chain family. Type I subfamily. In terms of assembly, heterohexadecamer of 8 large chains and 8 small chains. It depends on Mg(2+) as a cofactor.

It is found in the carboxysome. It catalyses the reaction 2 (2R)-3-phosphoglycerate + 2 H(+) = D-ribulose 1,5-bisphosphate + CO2 + H2O. The enzyme catalyses D-ribulose 1,5-bisphosphate + O2 = 2-phosphoglycolate + (2R)-3-phosphoglycerate + 2 H(+). RuBisCO catalyzes two reactions: the carboxylation of D-ribulose 1,5-bisphosphate, the primary event in carbon dioxide fixation, as well as the oxidative fragmentation of the pentose substrate in the photorespiration process. Both reactions occur simultaneously and in competition at the same active site. This chain is Ribulose bisphosphate carboxylase large chain, found in Synechococcus sp. (strain CC9311).